A 514-amino-acid polypeptide reads, in one-letter code: Ribonuclease Y (514 aa).

A helical membrane pass occupies residues 3 to 23; the sequence is VLWMVLGLAIGIAVGAAAGYI. Residues 203-266 form the KH domain; the sequence is TVKAVELPSD…EVARIAMERL (64 aa). The 94-residue stretch at 330–423 folds into the HD domain; sequence VLAHSVEVAN…VATADAVSAA (94 aa).

This sequence belongs to the RNase Y family.

The protein localises to the cell membrane. In terms of biological role, endoribonuclease that initiates mRNA decay. This chain is Ribonuclease Y, found in Rubrobacter xylanophilus (strain DSM 9941 / JCM 11954 / NBRC 16129 / PRD-1).